A 132-amino-acid chain; its full sequence is Ribosome-binding factor A (132 aa).

It belongs to the RbfA family. In terms of assembly, monomer. Binds 30S ribosomal subunits, but not 50S ribosomal subunits or 70S ribosomes.

The protein localises to the cytoplasm. One of several proteins that assist in the late maturation steps of the functional core of the 30S ribosomal subunit. Associates with free 30S ribosomal subunits (but not with 30S subunits that are part of 70S ribosomes or polysomes). Required for efficient processing of 16S rRNA. May interact with the 5'-terminal helix region of 16S rRNA. The chain is Ribosome-binding factor A from Pseudomonas putida (strain W619).